A 98-amino-acid polypeptide reads, in one-letter code: NADH-ubiquinone oxidoreductase chain 4L (98 aa).

3 helical membrane passes run 1–21 (MIPT…GMLT), 29–49 (SLLC…LIAL), and 61–81 (IILL…LVSI).

This sequence belongs to the complex I subunit 4L family. Core subunit of respiratory chain NADH dehydrogenase (Complex I) which is composed of 45 different subunits.

The protein localises to the mitochondrion inner membrane. It carries out the reaction a ubiquinone + NADH + 5 H(+)(in) = a ubiquinol + NAD(+) + 4 H(+)(out). Functionally, core subunit of the mitochondrial membrane respiratory chain NADH dehydrogenase (Complex I) which catalyzes electron transfer from NADH through the respiratory chain, using ubiquinone as an electron acceptor. Part of the enzyme membrane arm which is embedded in the lipid bilayer and involved in proton translocation. The sequence is that of NADH-ubiquinone oxidoreductase chain 4L (MT-ND4L) from Macaca ochreata subsp. brunnescens (Muna-buton macaque).